The chain runs to 366 residues: Protein-methionine-sulfoxide reductase catalytic subunit MsrP (366 aa).

Positions 1-22 are enriched in low complexity; it reads MHNTFTHTKNNTHTKNNTQAKN. A disordered region spans residues 1–40; sequence MHNTFTHTKNNTHTKNNTQAKNSGSQTKSNAVSLNKPRKL. Positions 1–76 form a signal peptide, tat-type signal; the sequence is MHNTFTHTKN…TLALPASAQA (76 aa). Polar residues predominate over residues 23–33; it reads SGSQTKSNAVS. Mo-molybdopterin is bound by residues asparagine 120, 123 to 124, cysteine 178, threonine 213, asparagine 265, arginine 270, and 281 to 283; these read YE and SIK.

The protein belongs to the MsrP family. In terms of assembly, heterodimer of a catalytic subunit (MsrP) and a heme-binding subunit (MsrQ). Requires Mo-molybdopterin as cofactor. Post-translationally, predicted to be exported by the Tat system. The position of the signal peptide cleavage has not been experimentally proven.

The protein resides in the periplasm. The enzyme catalyses L-methionyl-[protein] + a quinone + H2O = L-methionyl-(S)-S-oxide-[protein] + a quinol. It carries out the reaction L-methionyl-[protein] + a quinone + H2O = L-methionyl-(R)-S-oxide-[protein] + a quinol. Part of the MsrPQ system that repairs oxidized periplasmic proteins containing methionine sulfoxide residues (Met-O), using respiratory chain electrons. Thus protects these proteins from oxidative-stress damage caused by reactive species of oxygen and chlorine generated by the host defense mechanisms. MsrPQ is essential for the maintenance of envelope integrity under bleach stress, rescuing a wide series of structurally unrelated periplasmic proteins from methionine oxidation. The catalytic subunit MsrP is non-stereospecific, being able to reduce both (R-) and (S-) diastereoisomers of methionine sulfoxide. In Yersinia pestis, this protein is Protein-methionine-sulfoxide reductase catalytic subunit MsrP.